Consider the following 295-residue polypeptide: 4-hydroxy-tetrahydrodipicolinate synthase (295 aa).

T46 serves as a coordination point for pyruvate. The active-site Proton donor/acceptor is Y135. K164 serves as the catalytic Schiff-base intermediate with substrate. I205 is a pyruvate binding site.

This sequence belongs to the DapA family. In terms of assembly, homotetramer; dimer of dimers.

Its subcellular location is the cytoplasm. It catalyses the reaction L-aspartate 4-semialdehyde + pyruvate = (2S,4S)-4-hydroxy-2,3,4,5-tetrahydrodipicolinate + H2O + H(+). It functions in the pathway amino-acid biosynthesis; L-lysine biosynthesis via DAP pathway; (S)-tetrahydrodipicolinate from L-aspartate: step 3/4. Functionally, catalyzes the condensation of (S)-aspartate-beta-semialdehyde [(S)-ASA] and pyruvate to 4-hydroxy-tetrahydrodipicolinate (HTPA). This Aliarcobacter butzleri (strain RM4018) (Arcobacter butzleri) protein is 4-hydroxy-tetrahydrodipicolinate synthase.